Here is a 258-residue protein sequence, read N- to C-terminus: Synaptosomal-associated protein 29 (258 aa).

Positions 1-43 (MSAYPRSYNPFDEDAEDEDARPAPWSDSRDLADGPGAPADRQQ) are disordered. A phosphoserine mark is found at S65, S77, and S114. A coiled-coil region spans residues 76 to 107 (VSAEELVRQRGALERTEKMVDKMEQDLKTSQK). Disordered regions lie at residues 127-147 (PAET…GRLK) and 161-188 (QASH…SSEA). Phosphothreonine occurs at positions 130 and 137. Over residues 131–142 (PSAQNGTLTPQP) the composition is skewed to polar residues. Residues S163, S182, S185, S204, and S210 each carry the phosphoserine modification. A t-SNARE coiled-coil homology domain is found at 196-258 (RACHQRIDSN…TSTERKVRQL (63 aa)).

This sequence belongs to the SNAP-25 family. As to quaternary structure, forms a SNARE complex, composed of VAMP8, SNAP29 and STX17, involved in fusion of autophagosome with lysosome. Interacts with multiple syntaxins including STX6. Interacts with EIPR1. Interacts with STX17; this interaction is increased in the absence of TMEM39A.

It is found in the cytoplasm. Its subcellular location is the golgi apparatus membrane. It localises to the cytoplasmic vesicle. The protein localises to the autophagosome membrane. The protein resides in the cell projection. It is found in the cilium membrane. In terms of biological role, SNAREs, soluble N-ethylmaleimide-sensitive factor-attachment protein receptors, are essential proteins for fusion of cellular membranes. SNAREs localized on opposing membranes assemble to form a trans-SNARE complex, an extended, parallel four alpha-helical bundle that drives membrane fusion. SNAP29 is a SNARE involved in autophagy through the direct control of autophagosome membrane fusion with the lysososome membrane. Also plays a role in ciliogenesis by regulating membrane fusions. The polypeptide is Synaptosomal-associated protein 29 (Bos taurus (Bovine)).